Here is an 813-residue protein sequence, read N- to C-terminus: MTSFQEVPLQTSNFAHVIFQNVAKSYLPNAHLECHYTLTPYIHPHSKDWVGIFKVGWSTARDYYTFLWSPMPEQYVEGSTVNCVLAFQGYYLPNDDGEFYQFCYVTHKGEIRGASTPFQFRAASPVEELLTMEDEGNSDMLVVTTKAGLLELKIEKTLKEKEELLKLVSVLEKETAQLREQVGRMERELSHEKSRCEQLQAEQKGLLEVSQSLRVENEEFMKRYSDATSKAHQLEEDIVSVTHKAVEKETELDSLKDKLRKAQQEKEQLECQLKTEKDEKELYKVHLKNTEIENTKLVSEIQTLKNVDGNKESMITHFKEEIGKLQSCLADKENLHRALLLTTSNKEDTLLLKEQLRKAEEQVQATRQELIFLAKELSDAVNVRDKTMADLHTARLENERVKKQLADTLAELQLHAVKTDQEKTDTLEHELRREVEDLKLRLQMAADHYKEKFKECQRLQKQINKLSDQSASSNGVFTKRMGSQQKVNDASINTDPAASASAVDVKPAASCAAETDFDMSAKDHVCEVTKEMAEKVEKYNKCKQLLQDEKAKCNKYADELAQMELKWKEQVRIAENVKLELAELEDSYSLQLAEKDKEINCLASFLENLSREKELTKSLEDQKGRKMEGQSPQQVSRCLNTCSEQSGLLPTLPAAQPVLQYGNPYTAHETRDGADGAFYPDEIQRPPVRGPSWEDNVVCSQPARNLSRPDGLEDPEDSREDENVPIPPDPANQHLRGHGAGFCFDSSFDVHKKCPLCELMFPPNYDQIKFEEHVESHWKVCPMCSEQFPPDYDQQGFERHVQTHFDQNVLNFD.

Residues Ser-124, Ser-138, and Ser-225 each carry the phosphoserine modification. Residues 144–596 adopt a coiled-coil conformation; it reads TTKAGLLELK…SYSLQLAEKD (453 aa). Residues 320-420 form an oligomerization region; the sequence is EEIGKLQSCL…ELQLHAVKTD (101 aa). At Ser-618 the chain carries Phosphoserine; by IKKA. Phosphoserine is present on Ser-631. The tract at residues 667 to 732 is disordered; sequence AHETRDGADG…NVPIPPDPAN (66 aa). Position 692 is a phosphoserine; by IKKA (Ser-692). 2 consecutive UBZ1-type zinc fingers follow at residues 751 to 777 and 778 to 804; these read HKKCPLCELMFPPNYDQIKFEEHVESH and WKVCPMCSEQFPPDYDQQGFERHVQTH. Zn(2+) contacts are provided by Cys-754, Cys-757, His-773, His-777, Cys-781, Cys-784, His-800, and His-804.

As to quaternary structure, homooligomer. Interacts with TNFAIP3. Interacts with STARD13. Interacts with MYO6. Interacts with TOM1; the interaction is indirect and is mediated by MYO6, which acts as a bridge between TOM1 and TAX1BP1. Interacts with MAVS; this interaction induces MAVS polyubiquitination. Interacts with TNIP1. Interacts with TRAF6; this interaction mediates deubiquitination of TRAF6 and inhibition of NF-kappa-B activation. Interacts with RIPK1; this interaction negatively regulates RIPK1 ubiquitination. Interacts with NBR1. Interacts with TBK1. Interacts with RB1CC1. Interacts with SQSTM1. Interacts with AZI2. Interacts with TICAM1 and TRIM32; these interactions target TICAM1 to TAX1BP1-mediated selective autophagic degradation. In terms of processing, phosphorylated in the C-terminal region by CHUK/IKKA leading to NF-kappa-B signaling down-regulation.

It localises to the cytoplasm. The protein resides in the mitochondrion. It is found in the preautophagosomal structure. Its subcellular location is the cytoplasmic vesicle. The protein localises to the autophagosome. Its function is as follows. Ubiquitin-binding adapter that participates in inflammatory, antiviral and innate immune processes as well as selective autophagy regulation. Plays a key role in the negative regulation of NF-kappa-B and IRF3 signalings by acting as an adapter for the ubiquitin-editing enzyme A20/TNFAIP3 to bind and inactivate its substrates. Disrupts the interactions between the E3 ubiquitin ligase TRAF3 and TBK1/IKBKE to attenuate 'Lys63'-linked polyubiquitination of TBK1 and thereby IFN-beta production. Also recruits A20/TNFAIP3 to ubiquitinated signaling proteins TRAF6 and RIPK1, leading to their deubiquitination and disruption of IL-1 and TNF-induced NF-kappa-B signaling pathways. Inhibits virus-induced apoptosis by inducing the 'Lys-48'-linked polyubiquitination and degradation of MAVS via recruitment of the E3 ligase ITCH, thereby attenuating MAVS-mediated apoptosis signaling. As a macroautophagy/autophagy receptor, facilitates the xenophagic clearance of pathogenic bacteria such as Salmonella typhimurium and Mycobacterium tuberculosis. Upon NBR1 recruitment to the SQSTM1-ubiquitin condensates, acts as the major recruiter of RB1CC1 to these ubiquitin condensates to promote their autophagic degradation. Mediates the autophagic degradation of other substrates including TICAM1. The polypeptide is Tax1-binding protein 1 homolog (Tax1bp1) (Rattus norvegicus (Rat)).